Here is a 448-residue protein sequence, read N- to C-terminus: 4-hydroxybenzoate transporter PcaK (448 aa).

At 1–30 the chain is on the cytoplasmic side; sequence MNSPSLPAVERLDVQAFINAQPLSPYQWRI. The helical transmembrane segment at 31–51 threads the bilayer; that stretch reads VLLCFLIVFLDGLDTAAMGFI. Residues 52–67 are Periplasmic-facing; sequence APALTQDWGIDRASLG. Residues 68–88 form a helical membrane-spanning segment; the sequence is PVMSAALIGMVFGALGSGPLA. Topologically, residues 89 to 94 are cytoplasmic; sequence DRYGRK. Residues 95–115 form a helical membrane-spanning segment; the sequence is LVLVAAVFLFGLFSLASAYST. The Periplasmic portion of the chain corresponds to 116 to 119; the sequence is NVEQ. The chain crosses the membrane as a helical span at residues 120–140; that stretch reads LLALRFLTGLGLGAAMPNATT. Topologically, residues 141–152 are cytoplasmic; that stretch reads LLSEYTPERLKS. Residues 153–173 form a helical membrane-spanning segment; the sequence is LLVTSMFCGFNLGMACGGFVS. Residues 174–184 are Periplasmic-facing; sequence AKLIPLFGWHS. Residues 185–205 form a helical membrane-spanning segment; the sequence is LLLLGGLLPLVLAVVLLFRLP. Residues 206 to 261 are Cytoplasmic-facing; that stretch reads ESARYLVVRNRGSERVRQVLAPIAPAQVALARSFHVPEQQTVQARNVFAVIFSGTY. The chain crosses the membrane as a helical span at residues 262–282; it reads SAGTLLLWLTYFMGLVIVYLL. The Periplasmic segment spans residues 283–301; it reads TSWLPTLMRDSGASLEQAA. The chain crosses the membrane as a helical span at residues 302-322; the sequence is FIGALFQFGGVLSAVAVGWAM. The Cytoplasmic portion of the chain corresponds to 323-329; sequence DRFNPHK. The chain crosses the membrane as a helical span at residues 330-350; it reads VIGLFYLLAGVFAWCVGQSLG. Position 351 (Gln351) is a topological domain, periplasmic. Residues 352 to 372 traverse the membrane as a helical segment; that stretch reads VTLLATLVLLAGMCINGAQSA. The Cytoplasmic segment spans residues 373-398; sequence MPSLAARFYPTQGRATGVSWMLGIGR. A helical transmembrane segment spans residues 399-419; that stretch reads FGAILGAWIGATLLGLGWNFE. Topologically, residues 420–421 are periplasmic; that stretch reads QV. A helical membrane pass occupies residues 422–442; sequence LTALVLPAALATAAVLLKGLV. Over 443 to 448 the chain is Cytoplasmic; sequence SHADAG.

This sequence belongs to the major facilitator superfamily. Aromatic acid:H(+) symporter (AAHS) (TC 2.A.1.15) family.

Its subcellular location is the cell inner membrane. Transports 4-hydroxybenzoate (4-HBA) and protocatechuate across the membrane. Driven by the proton motive force. Also functions as a chemoreceptor, which is required for chemotaxis to aromatic acids. In Pseudomonas aeruginosa (strain ATCC 15692 / DSM 22644 / CIP 104116 / JCM 14847 / LMG 12228 / 1C / PRS 101 / PAO1), this protein is 4-hydroxybenzoate transporter PcaK (pcaK).